The following is a 591-amino-acid chain: Formate--tetrahydrofolate ligase (591 aa).

ATP is bound at residue 74-81; the sequence is TPLGEGKS.

Belongs to the formate--tetrahydrofolate ligase family.

It catalyses the reaction (6S)-5,6,7,8-tetrahydrofolate + formate + ATP = (6R)-10-formyltetrahydrofolate + ADP + phosphate. It participates in one-carbon metabolism; tetrahydrofolate interconversion. In Desulforapulum autotrophicum (strain ATCC 43914 / DSM 3382 / VKM B-1955 / HRM2) (Desulfobacterium autotrophicum), this protein is Formate--tetrahydrofolate ligase.